Reading from the N-terminus, the 152-residue chain is Deoxyuridine 5'-triphosphate nucleotidohydrolase (152 aa).

Residues 71-73 (RSG), asparagine 84, 88-90 (LID), and methionine 98 contribute to the substrate site.

Belongs to the dUTPase family. Mg(2+) is required as a cofactor.

It carries out the reaction dUTP + H2O = dUMP + diphosphate + H(+). The protein operates within pyrimidine metabolism; dUMP biosynthesis; dUMP from dCTP (dUTP route): step 2/2. In terms of biological role, this enzyme is involved in nucleotide metabolism: it produces dUMP, the immediate precursor of thymidine nucleotides and it decreases the intracellular concentration of dUTP so that uracil cannot be incorporated into DNA. The protein is Deoxyuridine 5'-triphosphate nucleotidohydrolase of Pectobacterium carotovorum subsp. carotovorum (strain PC1).